A 180-amino-acid polypeptide reads, in one-letter code: Inner membrane-spanning protein YciB (180 aa).

5 helical membrane passes run 22–42 (IYVA…LTWL), 50–70 (MTLI…VFHN), 76–96 (WKVT…QVVL), 121–141 (AAWA…AFWL), and 149–169 (FKVF…GIYI).

Belongs to the YciB family.

It is found in the cell inner membrane. Functionally, plays a role in cell envelope biogenesis, maintenance of cell envelope integrity and membrane homeostasis. The sequence is that of Inner membrane-spanning protein YciB from Edwardsiella ictaluri (strain 93-146).